A 273-amino-acid polypeptide reads, in one-letter code: 4-hydroxy-tetrahydrodipicolinate reductase (273 aa).

NAD(+) contacts are provided by residues 11–16 (GATGKM) and 106–108 (GTT). Histidine 162 serves as the catalytic Proton donor/acceptor. Position 163 (histidine 163) interacts with (S)-2,3,4,5-tetrahydrodipicolinate. Lysine 166 functions as the Proton donor in the catalytic mechanism. Position 172–173 (172–173 (GT)) interacts with (S)-2,3,4,5-tetrahydrodipicolinate.

This sequence belongs to the DapB family.

The protein resides in the cytoplasm. It catalyses the reaction (S)-2,3,4,5-tetrahydrodipicolinate + NAD(+) + H2O = (2S,4S)-4-hydroxy-2,3,4,5-tetrahydrodipicolinate + NADH + H(+). The catalysed reaction is (S)-2,3,4,5-tetrahydrodipicolinate + NADP(+) + H2O = (2S,4S)-4-hydroxy-2,3,4,5-tetrahydrodipicolinate + NADPH + H(+). Its pathway is amino-acid biosynthesis; L-lysine biosynthesis via DAP pathway; (S)-tetrahydrodipicolinate from L-aspartate: step 4/4. Functionally, catalyzes the conversion of 4-hydroxy-tetrahydrodipicolinate (HTPA) to tetrahydrodipicolinate. This Synechococcus sp. (strain ATCC 27144 / PCC 6301 / SAUG 1402/1) (Anacystis nidulans) protein is 4-hydroxy-tetrahydrodipicolinate reductase.